A 571-amino-acid polypeptide reads, in one-letter code: Proline--tRNA ligase (571 aa).

It belongs to the class-II aminoacyl-tRNA synthetase family. ProS type 1 subfamily. As to quaternary structure, homodimer.

The protein localises to the cytoplasm. It catalyses the reaction tRNA(Pro) + L-proline + ATP = L-prolyl-tRNA(Pro) + AMP + diphosphate. Functionally, catalyzes the attachment of proline to tRNA(Pro) in a two-step reaction: proline is first activated by ATP to form Pro-AMP and then transferred to the acceptor end of tRNA(Pro). As ProRS can inadvertently accommodate and process non-cognate amino acids such as alanine and cysteine, to avoid such errors it has two additional distinct editing activities against alanine. One activity is designated as 'pretransfer' editing and involves the tRNA(Pro)-independent hydrolysis of activated Ala-AMP. The other activity is designated 'posttransfer' editing and involves deacylation of mischarged Ala-tRNA(Pro). The misacylated Cys-tRNA(Pro) is not edited by ProRS. This Glaesserella parasuis serovar 5 (strain SH0165) (Haemophilus parasuis) protein is Proline--tRNA ligase.